Reading from the N-terminus, the 374-residue chain is MSNQHTLLTSNLLPVGSNISTWWNFGSMLLTCLMLQITTGFFLAIHYTANINLAFSSVIHITRDVPYGWIIQNTHAMGASMFFICIYMHIARGLYYGLYLNKMVWLSGVSLLITLMATAFFGYVLPWGQMSFWAATVITNLLTAIPYLGTVVTTWLWGGFSINDPTLTRFFALHFILPFIIISLSSIHIILLHNEGSNNPLGTNSDTDKIPFHPYHSYKDMLMTTILISILFYILSFTPNLFNDPENFTKANPMITPQHIKPEWYFLFAYGILRSIPNKLGGALALLLSIIILTSAPFTHTSHTRSMMFRPLAQILFWILATAFITITWTATKPVEPPFITISQWTSTLYFSFFMINPMLGLIENKITNTNTNT.

4 consecutive transmembrane segments (helical) span residues 25–45, 69–90, 105–125, and 170–190; these read FGSMLLTCLMLQITTGFFLAI, WIIQNTHAMGASMFFICIYMHI, WLSGVSLLITLMATAFFGYVL, and FFALHFILPFIIISLSSIHII. 2 residues coordinate heme b: His75 and His89. Positions 174 and 188 each coordinate heme b. An a ubiquinone-binding site is contributed by His193. 4 consecutive transmembrane segments (helical) span residues 218-238, 280-300, 312-332, and 339-358; these read YKDMLMTTILISILFYILSFT, LGGALALLLSIIILTSAPFTH, LAQILFWILATAFITITWTAT, and FITISQWTSTLYFSFFMINP.

It belongs to the cytochrome b family. As to quaternary structure, the cytochrome bc1 complex contains 3 respiratory subunits (MT-CYB, CYC1 and UQCRFS1), 2 core proteins (UQCRC1 and UQCRC2) and probably 6 low-molecular weight proteins. Heme b is required as a cofactor.

The protein localises to the mitochondrion inner membrane. Its function is as follows. Component of the ubiquinol-cytochrome c reductase complex (complex III or cytochrome b-c1 complex) that is part of the mitochondrial respiratory chain. The b-c1 complex mediates electron transfer from ubiquinol to cytochrome c. Contributes to the generation of a proton gradient across the mitochondrial membrane that is then used for ATP synthesis. In Calliophis bivirgatus (Blue Malaysian coral snake), this protein is Cytochrome b (MT-CYB).